A 110-amino-acid chain; its full sequence is Phosphoribosyl-ATP pyrophosphatase (110 aa).

It belongs to the PRA-PH family.

Its subcellular location is the cytoplasm. It carries out the reaction 1-(5-phospho-beta-D-ribosyl)-ATP + H2O = 1-(5-phospho-beta-D-ribosyl)-5'-AMP + diphosphate + H(+). The protein operates within amino-acid biosynthesis; L-histidine biosynthesis; L-histidine from 5-phospho-alpha-D-ribose 1-diphosphate: step 2/9. This chain is Phosphoribosyl-ATP pyrophosphatase, found in Pseudomonas syringae pv. tomato (strain ATCC BAA-871 / DC3000).